A 286-amino-acid polypeptide reads, in one-letter code: NAD(P)H azoreductase (286 aa).

NADP(+) is bound by residues glycine 6 to isoleucine 11, arginine 31, and glycine 136 to asparagine 141.

The protein belongs to the NmrA-type oxidoreductase family. Azoreductase type 3 subfamily. In terms of assembly, monomer.

Catalyzes the reductive cleavage of azo bond in aromatic azo compounds to the corresponding amines. Uses preferentially NADPH rather than NADH as an electron donor for its activity. The enzyme reductively cleaved Orange II and carboxy-Orange II, and can also reduce several sulfonated structural analogs, which carry a hydroxy group in the 2 position of the naphthol ring. The sequence is that of NAD(P)H azoreductase (azoB) from Xenophilus azovorans.